A 1088-amino-acid chain; its full sequence is V-type proton ATPase catalytic subunit A (1088 aa).

Glycine 257–threonine 264 provides a ligand contact to ATP. Positions leucine 485–isoleucine 662 constitute a DOD-type homing endonuclease domain.

It belongs to the ATPase alpha/beta chains family. As to quaternary structure, V-ATPase is a heteromultimeric enzyme composed of a peripheral catalytic V1 complex (components A to H) attached to an integral membrane V0 proton pore complex (components: a, c, c', c'', d, e, f and VOA1). In terms of processing, this protein undergoes a protein self splicing that involves a post-translational excision of the VDE intervening region (intein) followed by peptide ligation.

The protein resides in the vacuole membrane. The catalysed reaction is ATP + H2O + 4 H(+)(in) = ADP + phosphate + 5 H(+)(out). Its function is as follows. Catalytic subunit of the V1 complex of vacuolar(H+)-ATPase (V-ATPase), a multisubunit enzyme composed of a peripheral complex (V1) that hydrolyzes ATP and a membrane integral complex (V0) that translocates protons. V-ATPase is responsible for acidifying and maintaining the pH of intracellular compartments. In terms of biological role, VDE is an endonuclease that can cleave at a site present in a VMA1 allele that lacks the derived endonuclease segment of the open reading frame; cleavage at this site only occurs during meiosis and initiates 'homing', a genetic event that converts a VMA1 allele lacking VDE into one that contains it. In Candida tropicalis (Yeast), this protein is V-type proton ATPase catalytic subunit A (VMA1).